Consider the following 144-residue polypeptide: Large ribosomal subunit protein uL11 (144 aa).

This sequence belongs to the universal ribosomal protein uL11 family. Part of the ribosomal stalk of the 50S ribosomal subunit. Interacts with L10 and the large rRNA to form the base of the stalk. L10 forms an elongated spine to which L12 dimers bind in a sequential fashion forming a multimeric L10(L12)X complex. In terms of processing, one or more lysine residues are methylated.

In terms of biological role, forms part of the ribosomal stalk which helps the ribosome interact with GTP-bound translation factors. The polypeptide is Large ribosomal subunit protein uL11 (Neisseria meningitidis serogroup A / serotype 4A (strain DSM 15465 / Z2491)).